We begin with the raw amino-acid sequence, 301 residues long: Beta carbonic anhydrase 5, chloroplastic (301 aa).

Residues 1–56 (MAATPTHFSVSHDPFSSTSLLNLQTQAIFGPNHSLKTTQLRIPASFRRKATNLQVM) constitute a chloroplast transit peptide. Threonine 65 carries the post-translational modification Phosphothreonine. A Phosphoserine modification is found at serine 128. Cysteine 231 carries the post-translational modification S-nitrosocysteine.

It belongs to the beta-class carbonic anhydrase family. As to expression, strongly expressed in aerial tissues including leaves, stems, flowers and siliques.

The protein resides in the plastid. Its subcellular location is the chloroplast. The enzyme catalyses hydrogencarbonate + H(+) = CO2 + H2O. Its function is as follows. Reversible hydration of carbon dioxide. The polypeptide is Beta carbonic anhydrase 5, chloroplastic (BCA5) (Arabidopsis thaliana (Mouse-ear cress)).